Reading from the N-terminus, the 421-residue chain is MDLEAKVKKMGLGHEQGFGAPCLKCKEKCEGFELHFWRKICRNCKCGQEEHDVLLSNEEDRKVGKLFEDTKYTTLIAKLKSDGIPMYKRNVMILTNPVAAKKNISINTVTYEWAPPVQNQALARQYMQMLPKEKQPVAGSEGAQYRKKQLAKQLPAHDQDPSKCHELSPKEVKEMEQFVKKYKSEALGVGDVKLPREMNAQGPNRMCIPGGDRSTTSAVGAMEDKSAEHKTTQYSCYCCKLSMKEGDPAIYAERAGYDKLWHPACFVCSTCHELLVDMIYFWKNDKLYCGRHYCDSEKPRCAGCDELIFSNEYTQAENQNWHLKHFCCFDCDNILAGEIYVMVNDKPVCKPCYVKNHAVVCQGCHNAIDPEVQRVTYNNFSWHASTECFLCSCCSKCLIGQKFMPVEGMVFCSVECKKMMS.

Residues Met92 to Asn199 form the PET domain. The interval Glu133–Cys164 is disordered. Over residues Pro155–Cys164 the composition is skewed to basic and acidic residues. LIM zinc-binding domains are found at residues Tyr234–Glu297, Pro299–Val359, and Gln362–Ser421.

This sequence belongs to the prickle / espinas / testin family. As to quaternary structure, interacts via LIM domain 1 with ZYX. Interacts (via LIM domain 3) with ENAH and VASP. Interacts with ALKBH4, talin, actin, alpha-actinin, GRIP1 and PXN. Interacts (via LIM domain 2) with ACTL7A (via N-terminus). Heterodimer with ACTL7A; the heterodimer interacts with ENAH to form a heterotrimer.

It localises to the cytoplasm. It is found in the cell junction. The protein resides in the focal adhesion. In terms of biological role, scaffold protein that may play a role in cell adhesion, cell spreading and in the reorganization of the actin cytoskeleton. Plays a role in the regulation of cell proliferation. May act as a tumor suppressor. This chain is Testin (TES), found in Sus scrofa (Pig).